Reading from the N-terminus, the 135-residue chain is Probable histone H2A.2 (135 aa).

The protein belongs to the histone H2A family. The nucleosome is a histone octamer containing two molecules each of H2A, H2B, H3 and H4 assembled in one H3-H4 heterotetramer and two H2A-H2B heterodimers. The octamer wraps approximately 147 bp of DNA.

It is found in the nucleus. The protein localises to the chromosome. In terms of biological role, core component of nucleosome. Nucleosomes wrap and compact DNA into chromatin, limiting DNA accessibility to the cellular machineries which require DNA as a template. Histones thereby play a central role in transcription regulation, DNA repair, DNA replication and chromosomal stability. DNA accessibility is regulated via a complex set of post-translational modifications of histones, also called histone code, and nucleosome remodeling. The chain is Probable histone H2A.2 from Oryza sativa subsp. indica (Rice).